A 248-amino-acid polypeptide reads, in one-letter code: GTP cyclohydrolase 1 type 2 homolog (248 aa).

Positions 64, 65, 101, 216, and 220 each coordinate a divalent metal cation.

Belongs to the GTP cyclohydrolase I type 2/NIF3 family. As to quaternary structure, homohexamer.

The protein is GTP cyclohydrolase 1 type 2 homolog of Borreliella burgdorferi (strain ATCC 35210 / DSM 4680 / CIP 102532 / B31) (Borrelia burgdorferi).